Here is a 473-residue protein sequence, read N- to C-terminus: N-lysine methyltransferase SETD6 (473 aa).

At K39 the chain carries N6-methylated lysine; by autocatalysis. Residues 60 to 286 (PPAQVAVSRQ…KGHEIFNTYG (227 aa)) enclose the SET domain. S-adenosyl-L-methionine is bound at residue 73 to 75 (AGY). W122 contacts substrate. K179 carries the N6-methylated lysine; by autocatalysis modification. Y223 provides a ligand contact to S-adenosyl-L-methionine. S224 and Q226 together coordinate substrate. 251-252 (NH) is a binding site for S-adenosyl-L-methionine. Residues Y262 and Y297 each contribute to the substrate site. Y297 is an S-adenosyl-L-methionine binding site. The residue at position 372 (K372) is an N6-methylated lysine; by autocatalysis.

It belongs to the class V-like SAM-binding methyltransferase superfamily. Histone-lysine methyltransferase family. SETD6 subfamily. As to quaternary structure, monomer, homodimer and homotrimer; these structures are stabilized in the presence of S-adenosyl-L-methionine (SAM). In terms of processing, automethylated; Lys-39 and Lys-179 serve as the major automethylation sites.

It is found in the nucleus. It catalyses the reaction L-lysyl-[protein] + S-adenosyl-L-methionine = N(6)-methyl-L-lysyl-[protein] + S-adenosyl-L-homocysteine + H(+). The catalysed reaction is L-lysyl(8)-[histone H2AZ] + S-adenosyl-L-methionine = N(6)-methyl-L-lysyl(8)-[histone H2AZ] + S-adenosyl-L-homocysteine + H(+). Activated by automethylation. Its function is as follows. Protein-lysine N-methyltransferase. Monomethylates 'Lys-310' of the RELA subunit of NF-kappa-B complex, leading to down-regulation of NF-kappa-B transcription factor activity. Monomethylates 'Lys-8' of H2AZ (H2AZK8me1). Required for the maintenance of embryonic stem cell self-renewal. Methylates PAK4. The chain is N-lysine methyltransferase SETD6 from Homo sapiens (Human).